The chain runs to 102 residues: Bowman-Birk type wound-induced proteinase inhibitor WIP1 (102 aa).

A signal peptide spans 1–15 (MKSSPHLVLILCLQA). Cystine bridges form between Cys46-Cys102, Cys47-Cys60, Cys50-Cys98, Cys67-Cys74, and Cys71-Cys90.

The protein belongs to the Bowman-Birk serine protease inhibitor family.

The chain is Bowman-Birk type wound-induced proteinase inhibitor WIP1 (WIP1) from Zea mays (Maize).